Consider the following 540-residue polypeptide: GMP synthase [glutamine-hydrolyzing] (540 aa).

In terms of domain architecture, Glutamine amidotransferase type-1 spans 26–216 (IIIILDFGSQ…VYHICECEPT (191 aa)). C103 serves as the catalytic Nucleophile. Active-site residues include H190 and E192. One can recognise a GMPS ATP-PPase domain in the interval 217–415 (WTTAAFVEEA…VGLPEEIVQR (199 aa)). 244 to 250 (SGGVDSS) serves as a coordination point for ATP.

As to quaternary structure, homodimer.

It catalyses the reaction XMP + L-glutamine + ATP + H2O = GMP + L-glutamate + AMP + diphosphate + 2 H(+). Its pathway is purine metabolism; GMP biosynthesis; GMP from XMP (L-Gln route): step 1/1. In terms of biological role, catalyzes the synthesis of GMP from XMP. The sequence is that of GMP synthase [glutamine-hydrolyzing] from Nostoc sp. (strain PCC 7120 / SAG 25.82 / UTEX 2576).